A 1042-amino-acid chain; its full sequence is Isoleucine--tRNA ligase (1042 aa).

The 'HIGH' region motif lies at Pro-48–His-58. The 'KMSKS' region motif lies at Lys-594–Ser-598. Residue Lys-597 participates in ATP binding.

The protein belongs to the class-I aminoacyl-tRNA synthetase family. IleS type 2 subfamily. Monomer. Requires Zn(2+) as cofactor.

It localises to the cytoplasm. It carries out the reaction tRNA(Ile) + L-isoleucine + ATP = L-isoleucyl-tRNA(Ile) + AMP + diphosphate. Catalyzes the attachment of isoleucine to tRNA(Ile). As IleRS can inadvertently accommodate and process structurally similar amino acids such as valine, to avoid such errors it has two additional distinct tRNA(Ile)-dependent editing activities. One activity is designated as 'pretransfer' editing and involves the hydrolysis of activated Val-AMP. The other activity is designated 'posttransfer' editing and involves deacylation of mischarged Val-tRNA(Ile). This is Isoleucine--tRNA ligase from Borreliella afzelii (strain PKo) (Borrelia afzelii).